The chain runs to 166 residues: Interleukin-3 (166 aa).

The N-terminal stretch at 1-27 is a signal peptide; sequence MVLASSTTSILCMLLPLLMLFHQGLQI. Intrachain disulfides connect C43/C106 and C105/C166. N60 and N70 each carry an N-linked (GlcNAc...) asparagine glycan. A disordered region spans residues 145–166; sequence SVSRPPQPTSSSDNFRPMTVEC.

It belongs to the IL-3 family. In terms of assembly, monomer. In terms of tissue distribution, activated T-cells, mast cells, natural killer cells.

The protein localises to the secreted. Its function is as follows. Cytokine secreted predominantly by activated T-lymphocytes as well as mast cells and osteoblastic cells that controls the production and differentiation of hematopoietic progenitor cells into lineage-restricted cells. Also stimulates mature basophils, eosinophils, and monocytes to become functionally activated. In addition, plays an important role in neural cell proliferation and survival. Participates as well in bone homeostasis and inhibits osteoclast differentiation by preventing NF-kappa-B nuclear translocation and activation. Mechanistically, exerts its biological effects through a receptor composed of IL3RA subunit and a signal transducing subunit IL3RB. Receptor stimulation results in the rapid activation of JAK2 kinase activity leading to STAT5-mediated transcriptional program. Alternatively, contributes to cell survival under oxidative stress in non-hematopoietic systems by activating pathways mediated by PI3K/AKT and ERK. This Rattus norvegicus (Rat) protein is Interleukin-3 (Il3).